The sequence spans 406 residues: 3-isopropylmalate dehydrogenase, chloroplastic (406 aa).

Residues 1–34 constitute a chloroplast transit peptide; it reads MAAALQTNIRPVKFPATLRALTKQSSPAPFRVRC. At Ser-71 the chain carries Phosphoserine. 117–130 is a binding site for NAD(+); it reads GYKWDKNEKHLKPE. Substrate is bound by residues Arg-137, Arg-147, Arg-175, and Asp-265. Mg(2+)-binding residues include Asp-265, Asp-289, and Asp-293. 323–335 contacts NAD(+); the sequence is GSAPDIAGQDKAN.

It belongs to the isocitrate and isopropylmalate dehydrogenases family. Homodimer. Requires Mg(2+) as cofactor. Mn(2+) is required as a cofactor.

The protein localises to the plastid. It is found in the chloroplast. The enzyme catalyses (2R,3S)-3-isopropylmalate + NAD(+) = 4-methyl-2-oxopentanoate + CO2 + NADH. It participates in amino-acid biosynthesis; L-leucine biosynthesis; L-leucine from 3-methyl-2-oxobutanoate: step 3/4. Catalyzes the oxidation of 3-carboxy-2-hydroxy-4-methylpentanoate (3-isopropylmalate) to 3-carboxy-4-methyl-2-oxopentanoate. The product decarboxylates to 4-methyl-2 oxopentanoate. This chain is 3-isopropylmalate dehydrogenase, chloroplastic, found in Brassica napus (Rape).